Consider the following 293-residue polypeptide: Ribosomal protein L11 methyltransferase (293 aa).

S-adenosyl-L-methionine-binding residues include T145, G166, D188, and N230.

This sequence belongs to the methyltransferase superfamily. PrmA family.

It localises to the cytoplasm. It catalyses the reaction L-lysyl-[protein] + 3 S-adenosyl-L-methionine = N(6),N(6),N(6)-trimethyl-L-lysyl-[protein] + 3 S-adenosyl-L-homocysteine + 3 H(+). Functionally, methylates ribosomal protein L11. The protein is Ribosomal protein L11 methyltransferase of Salmonella agona (strain SL483).